The sequence spans 221 residues: Germin-like protein subfamily 1 member 17 (221 aa).

The N-terminal stretch at 1–21 (MKVSMSLILITLSALVTIAKA) is a signal peptide. Cysteine 31 and cysteine 48 form a disulfide bridge. The Cupin type-1 domain occupies 76 to 213 (SNVTTVNVDQ…AFQLDVNVVK (138 aa)). Asparagine 77 carries N-linked (GlcNAc...) asparagine glycosylation. 4 residues coordinate Mn(2+): histidine 110, histidine 112, glutamate 117, and histidine 159.

Belongs to the germin family. Oligomer (believed to be a pentamer but probably hexamer).

The protein localises to the secreted. Its subcellular location is the extracellular space. It localises to the apoplast. In terms of biological role, may play a role in plant defense. Probably has no oxalate oxidase activity even if the active site is conserved. This Arabidopsis thaliana (Mouse-ear cress) protein is Germin-like protein subfamily 1 member 17.